We begin with the raw amino-acid sequence, 75 residues long: Small ribosomal subunit protein bS18 (75 aa).

The protein belongs to the bacterial ribosomal protein bS18 family. In terms of assembly, part of the 30S ribosomal subunit. Forms a tight heterodimer with protein bS6.

In terms of biological role, binds as a heterodimer with protein bS6 to the central domain of the 16S rRNA, where it helps stabilize the platform of the 30S subunit. The polypeptide is Small ribosomal subunit protein bS18 (Cereibacter sphaeroides (strain ATCC 17029 / ATH 2.4.9) (Rhodobacter sphaeroides)).